The sequence spans 379 residues: Alpha-humulene synthase eupE (379 aa).

Belongs to the terpene synthase family. Alpha-humulene synthase eupE subfamily. The cofactor is Mg(2+).

The catalysed reaction is (2E,6E)-farnesyl diphosphate = alpha-humulene + diphosphate. The protein operates within secondary metabolite biosynthesis; terpenoid biosynthesis. In terms of biological role, alpha-humulene synthase; part of the gene cluster that mediates the biosynthesis of eupenifeldin, a bistropolone meroterpenoid that acts as an antitumor agent. The first step of eupenifeldin biosynthesis is the biosynthesis of 3-methylorcinaldehyde performed by the non-reducing polyketide synthase eupA. Oxidative dearomatization of 3-methylorcinaldehyde likely catalyzed by the FAD-dependent monooxygenase eupB is followed by oxidative ring expansion by the 2-oxoglutarate-dependent dioxygenase eupC to provide the first tropolone metabolite, tropolone stipitaldehyde. In parallel, generation of sesquiterpene alpha-humulene from farnesylpyrophosphate (FPP) is catalyzed by the terpene cyclase eupE. The cytochrome P450 monooxygenase eupD then hydroxylates humulene to humulenol. The putative Diels-Alderase eupF probably catalyzes the formation of the tropolone-humulene skeleton by linking humulenol and the polyketide moiety. The short-chain dehydrogenase/reductase eupG and the flavin-dependent monooxygenase eupH are also essential for eupenifeldin biosynthesis and are likely the additional decorating enzymes of the tropolone-humulene skeleton to produce final eupenifeldin or derivatives. This Phoma sp protein is Alpha-humulene synthase eupE.